The primary structure comprises 471 residues: DnaJ protein P58IPK homolog B (471 aa).

A signal peptide spans 1-24 (MARWPWRWRVLLPLLLLHSSPVFA). TPR repeat units lie at residues 32–65 (PSTL…DPNH), 66–99 (SEAY…KPGS), 112–146 (AQNA…SPNC), 148–180 (KAKL…DEDN), 181–214 (LDAL…DPEH), 227–260 (LLKK…DPDH), 265–298 (VHLY…DGEL), and 300–332 (DALT…SPQD). Residue Asn64 is glycosylated (N-linked (GlcNAc...) asparagine). One can recognise a J domain in the interval 353–419 (DWYKILGISK…DKRVRYDRGE (67 aa)).

As to quaternary structure, interacts with BIP1.

Its subcellular location is the endoplasmic reticulum lumen. May play a role in protein folding in the endoplasmic reticulum. The polypeptide is DnaJ protein P58IPK homolog B (Oryza sativa subsp. japonica (Rice)).